A 207-amino-acid chain; its full sequence is Proteasome subunit beta 2 (207 aa).

The propeptide at 1 to 10 is removed in mature form; by autocatalysis; sequence MLQLTEKFKG. The active-site Nucleophile is the Thr11.

It belongs to the peptidase T1B family. As to quaternary structure, the 20S proteasome core is composed of 14 alpha and 14 beta subunits that assemble into four stacked heptameric rings, resulting in a barrel-shaped structure. The two inner rings, each composed of seven catalytic beta subunits, are sandwiched by two outer rings, each composed of seven alpha subunits. The catalytic chamber with the active sites is on the inside of the barrel. Has a gated structure, the ends of the cylinder being occluded by the N-termini of the alpha-subunits. Is capped at one or both ends by the proteasome regulatory ATPase, PAN.

It is found in the cytoplasm. It catalyses the reaction Cleavage of peptide bonds with very broad specificity.. With respect to regulation, the formation of the proteasomal ATPase PAN-20S proteasome complex, via the docking of the C-termini of PAN into the intersubunit pockets in the alpha-rings, triggers opening of the gate for substrate entry. Interconversion between the open-gate and close-gate conformations leads to a dynamic regulation of the 20S proteasome proteolysis activity. Functionally, component of the proteasome core, a large protease complex with broad specificity involved in protein degradation. In Pyrococcus abyssi (strain GE5 / Orsay), this protein is Proteasome subunit beta 2.